A 322-amino-acid polypeptide reads, in one-letter code: Glycerate dehydrogenase (322 aa).

NAD(+) is bound by residues 158 to 159 (SI), aspartate 178, 239 to 241 (TAR), and aspartate 265. The active site involves arginine 241. Glutamate 270 is a catalytic residue. Histidine 288 (proton donor) is an active-site residue. An NAD(+)-binding site is contributed by 288–291 (HIGS).

It belongs to the D-isomer specific 2-hydroxyacid dehydrogenase family. As to quaternary structure, homodimer.

The catalysed reaction is (R)-glycerate + NAD(+) = 3-hydroxypyruvate + NADH + H(+). It participates in one-carbon metabolism; formaldehyde assimilation via serine pathway. Its function is as follows. Active on hydroxypyruvate and glyoxylate. The chain is Glycerate dehydrogenase from Hyphomicrobium methylovorum.